Reading from the N-terminus, the 303-residue chain is Putative S-adenosyl-L-methionine-dependent methyltransferase SCO6443 (303 aa).

Residues Asp130 and 159-160 (DL) each bind S-adenosyl-L-methionine.

The protein belongs to the UPF0677 family.

Its function is as follows. Exhibits S-adenosyl-L-methionine-dependent methyltransferase activity. The sequence is that of Putative S-adenosyl-L-methionine-dependent methyltransferase SCO6443 from Streptomyces coelicolor (strain ATCC BAA-471 / A3(2) / M145).